A 118-amino-acid chain; its full sequence is Large ribosomal subunit protein bL19 (118 aa).

Belongs to the bacterial ribosomal protein bL19 family.

Its function is as follows. This protein is located at the 30S-50S ribosomal subunit interface and may play a role in the structure and function of the aminoacyl-tRNA binding site. The chain is Large ribosomal subunit protein bL19 from Frankia casuarinae (strain DSM 45818 / CECT 9043 / HFP020203 / CcI3).